The chain runs to 606 residues: Polypeptide N-acetylgalactosaminyltransferase 9 (606 aa).

The Cytoplasmic portion of the chain corresponds to 1–6; the sequence is MAVARK. A helical; Signal-anchor for type II membrane protein membrane pass occupies residues 7–29; it reads IRTLLTVNILVFVGIVLFSVYCR. At 30 to 606 the chain is on the lumenal side; it reads LQGRSQELVR…IRNWIKHARH (577 aa). Positions 43–62 are disordered; sequence GGCRPRPATPAPGSPLRSGG. 2 cysteine pairs are disulfide-bonded: Cys144-Cys375 and Cys366-Cys445. The interval 153-264 is catalytic subdomain A; the sequence is LPQVSVVFIF…TGWAEPALSR (112 aa). Substrate-binding residues include Asp194 and Arg225. Positions 248, 250, and 380 each coordinate Mn(2+). Positions 321 to 383 are catalytic subdomain B; sequence PIRTPAMIGC…PCSRVAHIER (63 aa). Residues Arg383 and Tyr388 each coordinate substrate. Asn463 is a glycosylation site (N-linked (GlcNAc...) asparagine). The Ricin B-type lectin domain maps to 467 to 603; it reads TYGEVRNSKA…KWMIRNWIKH (137 aa). Disulfide bonds link Cys480/Cys496, Cys528/Cys543, and Cys570/Cys590.

It belongs to the glycosyltransferase 2 family. GalNAc-T subfamily. It depends on Mn(2+) as a cofactor.

The protein localises to the golgi apparatus membrane. The catalysed reaction is L-seryl-[protein] + UDP-N-acetyl-alpha-D-galactosamine = a 3-O-[N-acetyl-alpha-D-galactosaminyl]-L-seryl-[protein] + UDP + H(+). It catalyses the reaction L-threonyl-[protein] + UDP-N-acetyl-alpha-D-galactosamine = a 3-O-[N-acetyl-alpha-D-galactosaminyl]-L-threonyl-[protein] + UDP + H(+). Its pathway is protein modification; protein glycosylation. In terms of biological role, catalyzes the initial reaction in O-linked oligosaccharide biosynthesis, the transfer of an N-acetyl-D-galactosamine residue to a serine or threonine residue on the protein receptor. Does not glycosylate apomucin or SDC3. This is Polypeptide N-acetylgalactosaminyltransferase 9 (GALNT9) from Macaca fascicularis (Crab-eating macaque).